A 195-amino-acid chain; its full sequence is SPbeta prophage-derived uncharacterized protein YotM (195 aa).

The chain is SPbeta prophage-derived uncharacterized protein YotM (yotM) from Bacillus subtilis (strain 168).